A 146-amino-acid chain; its full sequence is Putative pre-16S rRNA nuclease (146 aa).

This sequence belongs to the YqgF nuclease family.

Its subcellular location is the cytoplasm. Could be a nuclease involved in processing of the 5'-end of pre-16S rRNA. The protein is Putative pre-16S rRNA nuclease of Paraburkholderia phytofirmans (strain DSM 17436 / LMG 22146 / PsJN) (Burkholderia phytofirmans).